A 145-amino-acid chain; its full sequence is Large ribosomal subunit protein uL11 (145 aa).

It belongs to the universal ribosomal protein uL11 family. Part of the ribosomal stalk of the 50S ribosomal subunit. Interacts with L10 and the large rRNA to form the base of the stalk. L10 forms an elongated spine to which L12 dimers bind in a sequential fashion forming a multimeric L10(L12)X complex. One or more lysine residues are methylated.

Functionally, forms part of the ribosomal stalk which helps the ribosome interact with GTP-bound translation factors. The sequence is that of Large ribosomal subunit protein uL11 from Corynebacterium glutamicum (strain ATCC 13032 / DSM 20300 / JCM 1318 / BCRC 11384 / CCUG 27702 / LMG 3730 / NBRC 12168 / NCIMB 10025 / NRRL B-2784 / 534).